Reading from the N-terminus, the 643-residue chain is uncharacterized protein (643 aa).

Positions Phe179 to Gln199 are enriched in low complexity. Disordered regions lie at residues Phe179–Val200 and Lys349–Asn377.

This is an uncharacterized protein from Caenorhabditis elegans.